The primary structure comprises 140 residues: Hemoglobin subunit beta (140 aa).

The Globin domain occupies 1 to 140 (GGSDVSAFLA…VGEALAKGYH (140 aa)). Heme b-binding residues include H57 and H86.

This sequence belongs to the globin family. In terms of assembly, heterotetramer of either two alpha-B chains or two alpha-C chains and two beta chains.

Functionally, the beta chain is a component of adult hemoglobins B. And C. The polypeptide is Hemoglobin subunit beta (HBB) (Aquarana catesbeiana (American bullfrog)).